A 150-amino-acid chain; its full sequence is MAAYLLAVAILFCIQGWPSGTVQGEVRPFMEVYQRSVCQPRETLVSILEEYPDKISKIFRPSCVAVLRCGGCCSDESLTCTSVGERTVELQVMQVTPKTLSSKIKVMKFREHTACECRPRSGSRVNIGKHKRSPEEGEREPSSPLTPGSL.

The first 24 residues, 1 to 24, serve as a signal peptide directing secretion; that stretch reads MAAYLLAVAILFCIQGWPSGTVQG. Glu25 carries the pyrrolidone carboxylic acid (Glu) modification. Disulfide bonds link Cys38–Cys80, Cys69–Cys115, and Cys73–Cys117. The interval 119–150 is disordered; the sequence is PRSGSRVNIGKHKRSPEEGEREPSSPLTPGSL. Residues 122–150 constitute a propeptide that is removed on maturation; it reads GSRVNIGKHKRSPEEGEREPSSPLTPGSL.

This sequence belongs to the PDGF/VEGF growth factor family. Snake venom VEGF subfamily. As to quaternary structure, homodimer; disulfide-linked. Interacts with high affinity with VEGF receptor-2 (KDR), and with a lower affinity with VEGF receptor-1 (FLT1). Does not bind VEGF receptor-3 (FLT4) and neuropilin-1 (NRP1). Expressed by the venom gland.

The protein resides in the secreted. Its function is as follows. Snake venom VEGFs that may contribute to venom dispersion and prey subjugation by inducing vascular permeability and hypotension. This protein induces an increase in capillary permeability after intradermal injection, as well as a drastic hypotensive effect after intravenous injection. The hypotension is mediated by nitric oxide (NO), which is produced by VEGF-activated endothelium NO synthase. Also induces angiogenesis in vitro, probably through VEGF receptor (KDR/VEGFR-2) signaling. This Bitis arietans (African puff adder) protein is Snake venom vascular endothelial growth factor toxin barietin.